Reading from the N-terminus, the 416-residue chain is uncharacterized protein (416 aa).

Residues 3–150 enclose the N-acetyltransferase domain; it reads LDVRTITPSE…SVYRAGLDAR (148 aa). Acetyl-CoA-binding positions include 83–85 and 91–96; these read VTV and RRGLLS. Tyrosine 124 functions as the Proton donor in the catalytic mechanism. The active-site Proton acceptor; via carboxylate is phenylalanine 416.

The protein belongs to the acetyltransferase Eis family. In terms of assembly, homohexamer; trimer of dimers.

This is an uncharacterized protein from Streptomyces griseus subsp. griseus (strain JCM 4626 / CBS 651.72 / NBRC 13350 / KCC S-0626 / ISP 5235).